A 258-amino-acid polypeptide reads, in one-letter code: Acyl-[acyl-carrier-protein]--UDP-N-acetylglucosamine O-acyltransferase (258 aa).

This sequence belongs to the transferase hexapeptide repeat family. LpxA subfamily. As to quaternary structure, homotrimer.

Its subcellular location is the cytoplasm. It carries out the reaction a (3R)-hydroxyacyl-[ACP] + UDP-N-acetyl-alpha-D-glucosamine = a UDP-3-O-[(3R)-3-hydroxyacyl]-N-acetyl-alpha-D-glucosamine + holo-[ACP]. It participates in glycolipid biosynthesis; lipid IV(A) biosynthesis; lipid IV(A) from (3R)-3-hydroxytetradecanoyl-[acyl-carrier-protein] and UDP-N-acetyl-alpha-D-glucosamine: step 1/6. Involved in the biosynthesis of lipid A, a phosphorylated glycolipid that anchors the lipopolysaccharide to the outer membrane of the cell. The protein is Acyl-[acyl-carrier-protein]--UDP-N-acetylglucosamine O-acyltransferase of Alkalilimnicola ehrlichii (strain ATCC BAA-1101 / DSM 17681 / MLHE-1).